The chain runs to 101 residues: Urease subunit beta (101 aa).

This sequence belongs to the urease beta subunit family. Heterotrimer of UreA (gamma), UreB (beta) and UreC (alpha) subunits. Three heterotrimers associate to form the active enzyme.

The protein resides in the cytoplasm. It catalyses the reaction urea + 2 H2O + H(+) = hydrogencarbonate + 2 NH4(+). Its pathway is nitrogen metabolism; urea degradation; CO(2) and NH(3) from urea (urease route): step 1/1. The chain is Urease subunit beta from Burkholderia mallei (strain NCTC 10247).